The sequence spans 747 residues: Threonine synthase-like 1 (747 aa).

Residue lysine 351 is modified to N6-(pyridoxal phosphate)lysine.

Belongs to the threonine synthase family. The cofactor is pyridoxal 5'-phosphate.

This Mus musculus (Mouse) protein is Threonine synthase-like 1 (Thnsl1).